Consider the following 477-residue polypeptide: Glycogen synthase (477 aa).

Lysine 15 is an ADP-alpha-D-glucose binding site.

It belongs to the glycosyltransferase 1 family. Bacterial/plant glycogen synthase subfamily.

It carries out the reaction [(1-&gt;4)-alpha-D-glucosyl](n) + ADP-alpha-D-glucose = [(1-&gt;4)-alpha-D-glucosyl](n+1) + ADP + H(+). It participates in glycan biosynthesis; glycogen biosynthesis. Functionally, synthesizes alpha-1,4-glucan chains using ADP-glucose. In Caldicellulosiruptor saccharolyticus (strain ATCC 43494 / DSM 8903 / Tp8T 6331), this protein is Glycogen synthase.